The primary structure comprises 654 residues: tRNA 5-methylaminomethyl-2-thiouridine biosynthesis bifunctional protein MnmC (654 aa).

Residues 1–236 form a tRNA (mnm(5)s(2)U34)-methyltransferase region; it reads MTDRIVPATL…KRAMLVGEFA (236 aa). An FAD-dependent cmnm(5)s(2)U34 oxidoreductase region spans residues 260-654; that stretch reads IGAGLAGCAA…IRALRRGRVA (395 aa).

It in the N-terminal section; belongs to the methyltransferase superfamily. tRNA (mnm(5)s(2)U34)-methyltransferase family. This sequence in the C-terminal section; belongs to the DAO family. It depends on FAD as a cofactor.

Its subcellular location is the cytoplasm. It catalyses the reaction 5-aminomethyl-2-thiouridine(34) in tRNA + S-adenosyl-L-methionine = 5-methylaminomethyl-2-thiouridine(34) in tRNA + S-adenosyl-L-homocysteine + H(+). Its function is as follows. Catalyzes the last two steps in the biosynthesis of 5-methylaminomethyl-2-thiouridine (mnm(5)s(2)U) at the wobble position (U34) in tRNA. Catalyzes the FAD-dependent demodification of cmnm(5)s(2)U34 to nm(5)s(2)U34, followed by the transfer of a methyl group from S-adenosyl-L-methionine to nm(5)s(2)U34, to form mnm(5)s(2)U34. In Burkholderia thailandensis (strain ATCC 700388 / DSM 13276 / CCUG 48851 / CIP 106301 / E264), this protein is tRNA 5-methylaminomethyl-2-thiouridine biosynthesis bifunctional protein MnmC.